The chain runs to 187 residues: Large ribosomal subunit protein bL25 (187 aa).

It belongs to the bacterial ribosomal protein bL25 family. CTC subfamily. As to quaternary structure, part of the 50S ribosomal subunit; part of the 5S rRNA/L5/L18/L25 subcomplex. Contacts the 5S rRNA. Binds to the 5S rRNA independently of L5 and L18.

This is one of the proteins that binds to the 5S RNA in the ribosome where it forms part of the central protuberance. The chain is Large ribosomal subunit protein bL25 from Tropheryma whipplei (strain TW08/27) (Whipple's bacillus).